Here is a 406-residue protein sequence, read N- to C-terminus: Cysteine desulfurase (406 aa).

At Lys226 the chain carries N6-(pyridoxal phosphate)lysine. Cys364 acts as the Cysteine persulfide intermediate in catalysis.

This sequence belongs to the class-V pyridoxal-phosphate-dependent aminotransferase family. Csd subfamily. As to quaternary structure, homodimer. Interacts with SufE and the SufBCD complex composed of SufB, SufC and SufD. The interaction with SufE is required to mediate the direct transfer of the sulfur atom from the S-sulfanylcysteine. Pyridoxal 5'-phosphate serves as cofactor.

It is found in the cytoplasm. It carries out the reaction (sulfur carrier)-H + L-cysteine = (sulfur carrier)-SH + L-alanine. The catalysed reaction is L-selenocysteine + AH2 = hydrogenselenide + L-alanine + A + H(+). It participates in cofactor biosynthesis; iron-sulfur cluster biosynthesis. Cysteine desulfurases mobilize the sulfur from L-cysteine to yield L-alanine, an essential step in sulfur metabolism for biosynthesis of a variety of sulfur-containing biomolecules. Component of the suf operon, which is activated and required under specific conditions such as oxidative stress and iron limitation. Acts as a potent selenocysteine lyase in vitro, that mobilizes selenium from L-selenocysteine. Selenocysteine lyase activity is however unsure in vivo. The chain is Cysteine desulfurase from Escherichia coli (strain SE11).